Consider the following 458-residue polypeptide: Transmembrane protein 135 (458 aa).

Transmembrane regions (helical) follow at residues 68 to 88 (ILQS…FFCI), 96 to 116 (FYLW…AILV), 149 to 169 (TLRN…MFFF), 298 to 318 (FQLG…SCFL), 331 to 351 (IIAG…TISM), and 380 to 400 (IIYS…VQTL).

The protein belongs to the TMEM135 family.

The protein localises to the mitochondrion membrane. Its subcellular location is the peroxisome membrane. Functionally, involved in mitochondrial metabolism by regulating the balance between mitochondrial fusion and fission. May act as a regulator of mitochondrial fission that promotes DNM1L-dependent fission through activation of DNM1L. May be involved in peroxisome organization. The protein is Transmembrane protein 135 of Bos taurus (Bovine).